Reading from the N-terminus, the 435-residue chain is 3-phosphoshikimate 1-carboxyvinyltransferase (435 aa).

Residues K28, S29, and R33 each contribute to the 3-phosphoshikimate site. Phosphoenolpyruvate is bound at residue K28. Phosphoenolpyruvate is bound by residues G100 and R128. Residues S173, Q175, D321, and K348 each coordinate 3-phosphoshikimate. Q175 is a phosphoenolpyruvate binding site. The active-site Proton acceptor is D321. Phosphoenolpyruvate contacts are provided by R352 and R394.

It belongs to the EPSP synthase family. In terms of assembly, monomer.

It localises to the cytoplasm. It catalyses the reaction 3-phosphoshikimate + phosphoenolpyruvate = 5-O-(1-carboxyvinyl)-3-phosphoshikimate + phosphate. It participates in metabolic intermediate biosynthesis; chorismate biosynthesis; chorismate from D-erythrose 4-phosphate and phosphoenolpyruvate: step 6/7. Its function is as follows. Catalyzes the transfer of the enolpyruvyl moiety of phosphoenolpyruvate (PEP) to the 5-hydroxyl of shikimate-3-phosphate (S3P) to produce enolpyruvyl shikimate-3-phosphate and inorganic phosphate. The chain is 3-phosphoshikimate 1-carboxyvinyltransferase from Desulfitobacterium hafniense (strain DSM 10664 / DCB-2).